The primary structure comprises 232 residues: F420-dependent NADP reductase (232 aa).

Residues 15 to 18 (TGDQ), 37 to 38 (SR), Lys-42, Val-80, Val-106, and Ala-151 contribute to the NADP(+) site.

The protein belongs to the F420-dependent NADP reductase family. In terms of assembly, homotetramer.

The catalysed reaction is reduced coenzyme F420-(gamma-L-Glu)(n) + NADP(+) = oxidized coenzyme F420-(gamma-L-Glu)(n) + NADPH + 2 H(+). In terms of biological role, catalyzes the reduction of NADP(+) with F420H(2) via hydride transfer, and likely the reverse reaction, i.e. the reduction of F420 with NADPH. Probably functions in the regeneration of NADPH required in biosynthetic reactions. Is specific for reduced F420 as electron donor for the reduction of NADP; neither reduced FAD nor FMN can act as electron donor. The enzyme is also specific for NADP; NAD is not utilized as substrate. This Methanothermobacter thermautotrophicus (strain ATCC 29096 / DSM 1053 / JCM 10044 / NBRC 100330 / Delta H) (Methanobacterium thermoautotrophicum) protein is F420-dependent NADP reductase (fno).